The primary structure comprises 288 residues: Rhox homeobox family member 2 (288 aa).

The interval 16 to 136 (SPAVDDEKEL…GLEPGNAQQP (121 aa)) is disordered. Acidic residues predominate over residues 39–48 (VKEEEEDAQP). A compositionally biased stretch (basic and acidic residues) spans 68 to 80 (GEEKDGGGEEKDG). The segment at residues 134–193 (QQPNVHAFTPLQLQELERIFQREQFPSEFLRRRLARSMNVTELAVQIWFENRRAKWRRHQ) is a DNA-binding region (homeobox). The Nuclear localization signal signature appears at 186–195 (RAKWRRHQRA).

Belongs to the paired-like homeobox family. PEPP subfamily. Testis. Not detected in epididymis nor placenta. In testis, mainly expressed in germ cells, but also detected in somatic cells such as Sertoli cells, Leydig cells and peritubular cells.

The protein localises to the nucleus. In terms of biological role, transcription factor maybe involved in reproductive processes. Modulates expression of target genes encoding proteins involved in processes relevant to spermatogenesis. The chain is Rhox homeobox family member 2 from Homo sapiens (Human).